The primary structure comprises 276 residues: Proteasome subunit beta type-8 (276 aa).

Residues Met1–Gly72 constitute a propeptide, removed in mature form. Residue Thr73 is the Nucleophile of the active site.

The protein belongs to the peptidase T1B family. As to quaternary structure, the 26S proteasome consists of a 20S proteasome core and two 19S regulatory subunits. The 20S proteasome core is composed of 28 subunits that are arranged in four stacked rings, resulting in a barrel-shaped structure. The two end rings are each formed by seven alpha subunits, and the two central rings are each formed by seven beta subunits. The catalytic chamber with the active sites is on the inside of the barrel. Component of the immunoproteasome, where it displaces the equivalent housekeeping subunit PSMB5. Component of the spermatoproteasome, a form of the proteasome specifically found in testis. Directly interacts with POMP. Autocleaved. The resulting N-terminal Thr residue of the mature subunit is responsible for the nucleophile proteolytic activity.

The protein resides in the cytoplasm. Its subcellular location is the nucleus. It carries out the reaction Cleavage of peptide bonds with very broad specificity.. The proteasome is a multicatalytic proteinase complex which is characterized by its ability to cleave peptides with Arg, Phe, Tyr, Leu, and Glu adjacent to the leaving group at neutral or slightly basic pH. The proteasome has an ATP-dependent proteolytic activity. This subunit is involved in antigen processing to generate class I binding peptides. May participate in the generation of spliced peptides resulting from the ligation of two separate proteasomal cleavage products that are not contiguous in the parental protein. Required for adipocyte differentiation. This is Proteasome subunit beta type-8 (PSMB8) from Canis lupus familiaris (Dog).